The chain runs to 290 residues: Putative transport permease ycf38 (290 aa).

Transmembrane regions (helical) follow at residues 21–41 (VTSF…FIQL), 46–66 (ITLI…GALF), 86–106 (PGIL…PLIF), 133–153 (FFIS…GVFL), 167–187 (FFFL…LALL), 194–213 (LIAV…TALA), and 261–281 (INIG…FLLF). An ABC transmembrane type-2 domain is found at 46-284 (ITLISGILQP…LVGFLLFKKI (239 aa)).

The protein belongs to the ABC-2 integral membrane protein family.

The protein resides in the plastid. It is found in the cyanelle membrane. The chain is Putative transport permease ycf38 (ycf38) from Cyanophora paradoxa.